Here is a 96-residue protein sequence, read N- to C-terminus: Large ribosomal subunit protein eL21 (96 aa).

The disordered stretch occupies residues 1-66 (MPSSNGPLEG…FDGQTGTVEG (66 aa)).

The protein belongs to the eukaryotic ribosomal protein eL21 family. In terms of assembly, part of the 50S ribosomal subunit. Interacts with protein L18 and binds the 5S rRNA. Has been cross-linked to L18.

Its function is as follows. This is one of 5 proteins that mediate the attachment of the 5S rRNA onto the large ribosomal subunit, stabilizing the orientation of adjacent RNA domains. The polypeptide is Large ribosomal subunit protein eL21 (rpl21e) (Haloarcula marismortui (strain ATCC 43049 / DSM 3752 / JCM 8966 / VKM B-1809) (Halobacterium marismortui)).